The chain runs to 86 residues: UPF0291 protein LBA1279 (86 aa).

Basic and acidic residues-rich tracts occupy residues 1–27 and 65–75; these read MNKD…KENE and NGKEVTSEKAK. 2 disordered regions span residues 1-36 and 65-86; these read MNKD…EEEE and NGKE…LRKD. Residues 76 to 86 are compositionally biased toward basic residues; the sequence is QAQRKKGLRKD.

It belongs to the UPF0291 family.

Its subcellular location is the cytoplasm. This chain is UPF0291 protein LBA1279, found in Lactobacillus acidophilus (strain ATCC 700396 / NCK56 / N2 / NCFM).